Here is a 746-residue protein sequence, read N- to C-terminus: Histone-lysine N-methyltransferase EZH2 (746 aa).

The interaction with DNMT1, DNMT3A and DNMT3B stretch occupies residues Met1–Ala340. The residue at position 21 (Ser21) is a Phosphoserine; by PKB/AKT1. The segment at Lys39–Val68 is interaction with EED. An O-linked (GlcNAc) serine glycan is attached at Ser75. Phosphoserine is present on Ser76. A disordered region spans residues Gln180–Lys217. Residues Asn182–Glu195 are compositionally biased toward acidic residues. Residues Arg196–Lys217 are compositionally biased toward basic and acidic residues. The tract at residues Glu329–Pro522 is interaction with CDYL. Phosphothreonine is present on Thr339. The tract at residues Ala340–Pro426 is disordered. Residue Thr345 is modified to Phosphothreonine; by CDK1 and CDK2. Basic residues predominate over residues Thr345 to Arg357. Residues Ser363 and Ser366 each carry the phosphoserine modification. Residue Thr367 is modified to Phosphothreonine. The segment covering Glu374–Gly385 has biased composition (basic and acidic residues). At Thr487 the chain carries Phosphothreonine. Residues Cys503–Ser605 enclose the CXC domain. The SET domain maps to Lys612–Arg727. Lys634 is covalently cross-linked (Glycyl lysine isopeptide (Lys-Gly) (interchain with G-Cter in SUMO2)).

This sequence belongs to the class V-like SAM-binding methyltransferase superfamily. Histone-lysine methyltransferase family. EZ subfamily. As to quaternary structure, component of the PRC2/EED-EZH2 complex, which includes EED, EZH2, SUZ12, RBBP4 and RBBP7 and possibly AEBP2. The minimum components required for methyltransferase activity of the PRC2/EED-EZH2 complex are EED, EZH2 and SUZ12. The PRC2 complex may also interact with DNMT1, DNMT3A, DNMT3B and PHF1 via the EZH2 subunit and with SIRT1 via the SUZ12 subunit. Interacts with HDAC1 and HDAC2. Binds ATRX via the SET domain. Interacts with PRAME. Interacts with CDYL. Interacts with EED. Interacts with BMAL1. Interacts with CLOCK and CRY1. Interacts with DNMT3L; the interaction is direct. Interacts with EZHIP; the interaction blocks EZH2 methyltransferase activity. Interacts with ZNF263; recruited to the SIX3 promoter along with other proteins involved in chromatin modification and transcriptional corepression where it contributes to transcriptional repression. Interacts with ARMC12. Interacts with ZMYND8; the interaction is dependent on the presence of chromatin. Interacts with DDX18; this interaction inhibits the PRC2 complex. Phosphorylated by AKT1. Phosphorylation by AKT1 reduces methyltransferase activity. Phosphorylation at Thr-345 by CDK1 and CDK2 promotes maintenance of H3K27me3 levels at EZH2-target loci, thus leading to epigenetic gene silencing. In terms of processing, sumoylated. Post-translationally, glycosylated: O-GlcNAcylation at Ser-75 by OGT increases stability of EZH2 and facilitates the formation of H3K27me3 by the PRC2/EED-EZH2 complex. As to expression, present in actively dividing cells. Widely expressed in early embryos. In later embryogenesis, expression restricted to central and peripheral nervous system, liver and thymus. In adult, highest expression in spleen, testis and placenta. Lower levels in intestine, muscle and ovary and very low levels in brain and liver. No expression in heart, thyroid gland, lung and kidney.

The protein localises to the nucleus. It is found in the chromosome. It catalyses the reaction L-lysyl(27)-[histone H3] + 3 S-adenosyl-L-methionine = N(6),N(6),N(6)-trimethyl-L-lysyl(27)-[histone H3] + 3 S-adenosyl-L-homocysteine + 3 H(+). Functionally, polycomb group (PcG) protein. Catalytic subunit of the PRC2/EED-EZH2 complex, which methylates (H3K9me) and 'Lys-27' (H3K27me) of histone H3, leading to transcriptional repression of the affected target gene. Able to mono-, di- and trimethylate 'Lys-27' of histone H3 to form H3K27me1, H3K27me2 and H3K27me3, respectively. Displays a preference for substrates with less methylation, loses activity when progressively more methyl groups are incorporated into H3K27, H3K27me0 &gt; H3K27me1 &gt; H3K27me2. Compared to EZH1-containing complexes, it is more abundant in embryonic stem cells and plays a major role in forming H3K27me3, which is required for embryonic stem cell identity and proper differentiation. The PRC2/EED-EZH2 complex may also serve as a recruiting platform for DNA methyltransferases, thereby linking two epigenetic repression systems. Genes repressed by the PRC2/EED-EZH2 complex include HOXA7, HOXB6 and HOXC8. EZH2 can also methylate non-histone proteins such as the transcription factor GATA4 and the nuclear receptor RORA. Regulates the circadian clock via histone methylation at the promoter of the circadian genes. Essential for the CRY1/2-mediated repression of the transcriptional activation of PER1/2 by the CLOCK-BMAL1 heterodimer; involved in the di and trimethylation of 'Lys-27' of histone H3 on PER1/2 promoters which is necessary for the CRY1/2 proteins to inhibit transcription. This Mus musculus (Mouse) protein is Histone-lysine N-methyltransferase EZH2.